Here is a 277-residue protein sequence, read N- to C-terminus: Large ribosomal subunit protein uL2 (277 aa).

Disordered regions lie at residues 38 to 58 and 219 to 277; these read HRKG…GGGH and TVRG…RKNK.

Belongs to the universal ribosomal protein uL2 family. As to quaternary structure, part of the 50S ribosomal subunit. Forms a bridge to the 30S subunit in the 70S ribosome.

One of the primary rRNA binding proteins. Required for association of the 30S and 50S subunits to form the 70S ribosome, for tRNA binding and peptide bond formation. It has been suggested to have peptidyltransferase activity; this is somewhat controversial. Makes several contacts with the 16S rRNA in the 70S ribosome. This chain is Large ribosomal subunit protein uL2, found in Bacillus pumilus (strain SAFR-032).